A 245-amino-acid chain; its full sequence is Orotidine 5'-phosphate decarboxylase (245 aa).

Substrate is bound by residues D22, K44, 71-80, T131, R192, Q201, G221, and R222; that span reads DLKFHDIPNT. Residue K73 is the Proton donor of the active site.

It belongs to the OMP decarboxylase family. Type 1 subfamily. Homodimer.

It catalyses the reaction orotidine 5'-phosphate + H(+) = UMP + CO2. It functions in the pathway pyrimidine metabolism; UMP biosynthesis via de novo pathway; UMP from orotate: step 2/2. In terms of biological role, catalyzes the decarboxylation of orotidine 5'-monophosphate (OMP) to uridine 5'-monophosphate (UMP). The sequence is that of Orotidine 5'-phosphate decarboxylase from Salmonella typhi.